We begin with the raw amino-acid sequence, 1037 residues long: Serine/threonine-protein kinase ULK2 (1037 aa).

The Protein kinase domain occupies 9–271; it reads YCKRDLVGHG…FEAFFSHPFL (263 aa). Residues 15–23 and lysine 39 contribute to the ATP site; that span reads VGHGAFAVV. The Proton acceptor role is filled by aspartate 131. A disordered region spans residues 319-350; it reads ENLSSPPLGPPNYLQVSKDSASNSSKNSSCDT. The span at 335–348 shows a compositional bias: low complexity; it reads SKDSASNSSKNSSC. Position 430 is a phosphoserine (serine 430). 4 disordered regions span residues 452–480, 494–515, 540–594, and 626–697; these read CSPV…PSPL, GHPQ…PQTQ, QKLR…KTPL, and HGPA…NTER. Polar residues-rich tracts occupy residues 506 to 515 and 571 to 585; these read SSGSPVPQTQ and LGTS…SPRN. Basic and acidic residues predominate over residues 632–643; it reads QSKDGNDPRECS. The segment covering 658-678 has biased composition (polar residues); it reads QQQSKAVFGRSVSTGKLSEQQ. 2 positions are modified to phosphoserine: serine 772 and serine 781. The CTD-like region stretch occupies residues 813 to 1037; that stretch reads ELPEETLMER…SALCCSTATV (225 aa).

This sequence belongs to the protein kinase superfamily. Ser/Thr protein kinase family. APG1/unc-51/ULK1 subfamily. In terms of assembly, component of a complex consisting of ATG13/KIAA0652, ULK1 and RB1CC1/FIP200. Interacts (via C-terminus) with ATG13/KIAA0652. Associates with the mammalian target of rapamycin complex 1 (mTORC1) through an interaction with RPTOR. Interacts with SYNGAP1. Post-translationally, autophosphorylated. In response to nutrient limitation, probably phosphorylated and activated by AMPK, leading to activate autophagy. As to expression, widely expressed.

The protein localises to the cytoplasmic vesicle membrane. It catalyses the reaction L-seryl-[protein] + ATP = O-phospho-L-seryl-[protein] + ADP + H(+). The catalysed reaction is L-threonyl-[protein] + ATP = O-phospho-L-threonyl-[protein] + ADP + H(+). Functionally, serine/threonine-protein kinase involved in autophagy in response to starvation. Acts upstream of phosphatidylinositol 3-kinase PIK3C3 to regulate the formation of autophagophores, the precursors of autophagosomes. Part of regulatory feedback loops in autophagy: acts both as a downstream effector and a negative regulator of mammalian target of rapamycin complex 1 (mTORC1) via interaction with RPTOR. Activated via phosphorylation by AMPK, also acts as a negative regulator of AMPK through phosphorylation of the AMPK subunits PRKAA1, PRKAB2 and PRKAG1. May phosphorylate ATG13/KIAA0652, FRS2, FRS3 and RPTOR; however such data need additional evidences. Not involved in ammonia-induced autophagy or in autophagic response of cerebellar granule neurons (CGN) to low potassium concentration. Plays a role early in neuronal differentiation and is required for granule cell axon formation: may govern axon formation via Ras-like GTPase signaling and through regulation of the Rab5-mediated endocytic pathways within developing axons. In Mus musculus (Mouse), this protein is Serine/threonine-protein kinase ULK2 (Ulk2).